Consider the following 122-residue polypeptide: Lysozyme (122 aa).

The I-type lysozyme domain maps to 3–118 (GGIVSQRCLS…WNRLQKISGC (116 aa)). 7 cysteine pairs are disulfide-bonded: Cys10–Cys86, Cys13–Cys118, Cys15–Cys21, Cys26–Cys35, Cys48–Cys68, Cys58–Cys64, and Cys82–Cys100. Catalysis depends on Glu18, which acts as the Proton donor. The Nucleophile role is filled by Asp29. A substrate-binding site is contributed by 41-47 (KEAYWID). Residues Tyr72, His93, 93 to 95 (HNG), and Lys102 contribute to the substrate site.

This sequence belongs to the glycosyl hydrolase 22 family. Type-I lysozyme subfamily. In terms of assembly, monomer.

The protein localises to the secreted. The catalysed reaction is Hydrolysis of (1-&gt;4)-beta-linkages between N-acetylmuramic acid and N-acetyl-D-glucosamine residues in a peptidoglycan and between N-acetyl-D-glucosamine residues in chitodextrins.. Its function is as follows. Has bacteriolytic activity against Gram-positive bacteria M.luteus. Also has chitinase activity. This is Lysozyme from Meretrix lusoria (Hard clam).